A 64-amino-acid polypeptide reads, in one-letter code: uncharacterized protein (64 aa).

This is an uncharacterized protein from Sulfolobus islandicus filamentous virus (isolate Iceland/Hveragerdi) (SIFV).